We begin with the raw amino-acid sequence, 460 residues long: Hydroxymethylglutaryl-CoA synthase erg13B (460 aa).

The active-site Proton donor/acceptor is Glu86. The active-site Acyl-thioester intermediate is Cys120. (3S)-3-hydroxy-3-methylglutaryl-CoA-binding residues include Cys120, Thr162, Ser212, His263, Lys272, Asn340, and Ser374. His263 functions as the Proton donor/acceptor in the catalytic mechanism.

Belongs to the thiolase-like superfamily. HMG-CoA synthase family.

It carries out the reaction acetoacetyl-CoA + acetyl-CoA + H2O = (3S)-3-hydroxy-3-methylglutaryl-CoA + CoA + H(+). It participates in metabolic intermediate biosynthesis; (R)-mevalonate biosynthesis; (R)-mevalonate from acetyl-CoA: step 2/3. Its function is as follows. Hydroxymethylglutaryl-CoA synthase; part of the first module of ergosterol biosynthesis pathway that includes the early steps of the pathway, conserved across all eukaryotes, and which results in the formation of mevalonate from acetyl-coenzyme A (acetyl-CoA). Erg13A and erg13B condense acetyl-CoA with acetoacetyl-CoA to form hydroxymethylglutaryl-CoA (HMG-CoA). The first module starts with the action of the cytosolic acetyl-CoA acetyltransferase erg10B that catalyzes the formation of acetoacetyl-CoA. The hydroxymethylglutaryl-CoA synthases erg13A and erg13B then condense acetyl-CoA with acetoacetyl-CoA to form HMG-CoA. The rate-limiting step of the early module is the reduction to mevalonate by the 3-hydroxy-3-methylglutaryl-coenzyme A (HMG-CoA) reductases hmg1 and hmg2. Mevalonate is also a precursor for the extracellular siderophore triacetylfusarinine C (TAFC). In Aspergillus fumigatus (strain ATCC MYA-4609 / CBS 101355 / FGSC A1100 / Af293) (Neosartorya fumigata), this protein is Hydroxymethylglutaryl-CoA synthase erg13B.